A 277-amino-acid polypeptide reads, in one-letter code: MAPTTDPAVNELKSTVHKLEQRIAELEGRLSGHGGGSSSAQESVRMILMGPPGAGKGTQAPRIKEKFCACHLATGDMLRAQVAAKTPLGREAKKIMDAGGLVSDEIMVNMIKTELENNQECAKGFILDGFPRTVTQAEKLDGMLEATQKPLQHAVELQIDDQLLVSRITGRLVHPASGRSYHKIFNPPKAPMTDDATGEPLIQRSDDNEETLKKRLSTYHAQTSPVVAYYQKTGIWKPVDASQDPGQVWKSLLKIFDDKAYVAGRSGSLLNKIGLKN.

53–58 lines the ATP pocket; that stretch reads GAGKGT. Residues 73 to 102 form an NMP region; it reads ATGDMLRAQVAAKTPLGREAKKIMDAGGLV. AMP contacts are provided by residues T74, R79, 100-102, 129-132, and Q136; these read GLV and GFPR. The interval 170 to 207 is LID; the sequence is GRLVHPASGRSYHKIFNPPKAPMTDDATGEPLIQRSDD. Residues R171 and 180–181 each bind ATP; that span reads SY. AMP is bound by residues R204 and R215. Q243 contributes to the ATP binding site.

The protein belongs to the adenylate kinase family. AK2 subfamily. Monomer.

The protein resides in the cytoplasm. It localises to the cytosol. Its subcellular location is the mitochondrion intermembrane space. It catalyses the reaction AMP + ATP = 2 ADP. In terms of biological role, catalyzes the reversible transfer of the terminal phosphate group between ATP and AMP. Plays an important role in cellular energy homeostasis and in adenine nucleotide metabolism. Adenylate kinase activity is critical for regulation of the phosphate utilization and the AMP de novo biosynthesis pathways. The polypeptide is Adenylate kinase (Phaeosphaeria nodorum (strain SN15 / ATCC MYA-4574 / FGSC 10173) (Glume blotch fungus)).